Reading from the N-terminus, the 206-residue chain is Halorhodopsin (206 aa).

Residues Ile-1–Gly-15 traverse the membrane as a helical segment. Topologically, residues Arg-16–Pro-21 are cytoplasmic. Residues Arg-22 to Val-45 traverse the membrane as a helical segment. Residues Ser-46–Pro-75 are Extracellular-facing. The helical transmembrane segment at Trp-76 to Ala-97 threads the bilayer. At Gly-98–Asn-100 the chain is on the cytoplasmic side. A helical membrane pass occupies residues Met-101–Thr-124. The Extracellular segment spans residues Thr-125–Ser-127. A helical membrane pass occupies residues Tyr-128–Leu-150. Topologically, residues Ala-151–Thr-162 are cytoplasmic. A helical membrane pass occupies residues Ala-163 to Leu-186. Topologically, residues Gly-187 to Asp-195 are extracellular. A helical membrane pass occupies residues Ile-196–Met-206.

This sequence belongs to the archaeal/bacterial/fungal opsin family.

It is found in the cell membrane. Its function is as follows. Light-driven chloride pump. This is Halorhodopsin (hop) from Halobacterium halobium (strain mex).